The primary structure comprises 184 residues: Photosystem I assembly protein Ycf4 (184 aa).

A run of 2 helical transmembrane segments spans residues V20–S42 and I57–Y79.

It belongs to the Ycf4 family.

The protein localises to the plastid. It localises to the chloroplast thylakoid membrane. Functionally, seems to be required for the assembly of the photosystem I complex. In Adiantum capillus-veneris (Maidenhair fern), this protein is Photosystem I assembly protein Ycf4.